Consider the following 226-residue polypeptide: ATP synthase F(0) complex subunit a (226 aa).

6 helical membrane-spanning segments follow: residues 12 to 32 (PTMM…ILFP), 68 to 88 (WALM…LGLL), 97 to 117 (QLSM…ITGF), 138 to 158 (IPML…ALAV), 164 to 184 (ITAG…LMDI), and 189 to 209 (AFIT…VALI).

Belongs to the ATPase A chain family. In terms of assembly, component of the ATP synthase complex composed at least of ATP5F1A/subunit alpha, ATP5F1B/subunit beta, ATP5MC1/subunit c (homooctomer), MT-ATP6/subunit a, MT-ATP8/subunit 8, ATP5ME/subunit e, ATP5MF/subunit f, ATP5MG/subunit g, ATP5MK/subunit k, ATP5MJ/subunit j, ATP5F1C/subunit gamma, ATP5F1D/subunit delta, ATP5F1E/subunit epsilon, ATP5PF/subunit F6, ATP5PB/subunit b, ATP5PD/subunit d, ATP5PO/subunit OSCP. ATP synthase complex consists of a soluble F(1) head domain (subunits alpha(3) and beta(3)) - the catalytic core - and a membrane F(0) domain - the membrane proton channel (subunits c, a, 8, e, f, g, k and j). These two domains are linked by a central stalk (subunits gamma, delta, and epsilon) rotating inside the F1 region and a stationary peripheral stalk (subunits F6, b, d, and OSCP). Interacts with DNAJC30; interaction is direct.

It localises to the mitochondrion inner membrane. It catalyses the reaction H(+)(in) = H(+)(out). Its function is as follows. Subunit a, of the mitochondrial membrane ATP synthase complex (F(1)F(0) ATP synthase or Complex V) that produces ATP from ADP in the presence of a proton gradient across the membrane which is generated by electron transport complexes of the respiratory chain. ATP synthase complex consist of a soluble F(1) head domain - the catalytic core - and a membrane F(1) domain - the membrane proton channel. These two domains are linked by a central stalk rotating inside the F(1) region and a stationary peripheral stalk. During catalysis, ATP synthesis in the catalytic domain of F(1) is coupled via a rotary mechanism of the central stalk subunits to proton translocation. With the subunit c (ATP5MC1), forms the proton-conducting channel in the F(0) domain, that contains two crucial half-channels (inlet and outlet) that facilitate proton movement from the mitochondrial intermembrane space (IMS) into the matrix. Protons are taken up via the inlet half-channel and released through the outlet half-channel, following a Grotthuss mechanism. The protein is ATP synthase F(0) complex subunit a of Phoca vitulina (Harbor seal).